A 512-amino-acid polypeptide reads, in one-letter code: GMP synthase [glutamine-hydrolyzing] (512 aa).

Positions 7–197 constitute a Glutamine amidotransferase type-1 domain; sequence TIIVLDFGSQ…VFGVCGCSEG (191 aa). The Nucleophile role is filled by cysteine 84. Active-site residues include histidine 171 and glutamate 173. The 190-residue stretch at 198-387 folds into the GMPS ATP-PPase domain; it reads WNMENFIEVE…LGIPDEIVWR (190 aa). Position 225 to 231 (225 to 231) interacts with ATP; it reads SGGVDSS.

In terms of assembly, homodimer.

The enzyme catalyses XMP + L-glutamine + ATP + H2O = GMP + L-glutamate + AMP + diphosphate + 2 H(+). The protein operates within purine metabolism; GMP biosynthesis; GMP from XMP (L-Gln route): step 1/1. Functionally, catalyzes the synthesis of GMP from XMP. In Bacillus cereus (strain ATCC 10987 / NRS 248), this protein is GMP synthase [glutamine-hydrolyzing].